Consider the following 180-residue polypeptide: Signal peptidase complex subunit 3 (180 aa).

Over 1–11 the chain is Cytoplasmic; sequence MNTVLSRANSL. Residues 12–32 traverse the membrane as a helical; Signal-anchor for type II membrane protein segment; sequence FAFSLSVMAALTFGCFITTAF. At 33-180 the chain is on the lumenal side; the sequence is KERSVPVSIA…PDTYETTKSY (148 aa). A glycan (N-linked (GlcNAc...) asparagine) is linked at N141.

This sequence belongs to the SPCS3 family. Component of the signal peptidase complex paralog A (SPC-A) composed of a catalytic subunit SEC11A and three accessory subunits SPCS1, SPCS2 and SPCS3. Component of the signal peptidase complex paralog C (SPC-C) composed of a catalytic subunit SEC11C and three accessory subunits SPCS1, SPCS2 and SPCS3. The complex induces a local thinning of the ER membrane which is used to measure the length of the signal peptide (SP) h-region of protein substrates. This ensures the selectivity of the complex towards h-regions shorter than 18-20 amino acids. Expressed in hen oviduct (at protein level).

It localises to the endoplasmic reticulum membrane. Essential component of the signal peptidase complex (SPC) which catalyzes the cleavage of N-terminal signal sequences from nascent proteins as they are translocated into the lumen of the endoplasmic reticulum. Essential for the SPC catalytic activity, possibly by stabilizing and positioning the active center of the complex close to the lumenal surface. The protein is Signal peptidase complex subunit 3 of Gallus gallus (Chicken).